The chain runs to 467 residues: Spermatogenesis- and oogenesis-specific basic helix-loop-helix-containing protein 2 (467 aa).

Positions 200-251 (QASFLHSTKEKLRRERIKSCCEQLRTLLPYVKGRKSDVASVIEATVDYVKQV) constitute a bHLH domain. The segment covering 443 to 453 (ASASDHQASQP) has biased composition (low complexity). The interval 443–467 (ASASDHQASQPPALPSPQPHDSSYF) is disordered.

In terms of assembly, forms both hetero- and homodimers with SOHLH1. Preferentially expressed in the adult ovary and testis. Expressed in the majority of spermatogonia in adult animals, but not in the most undifferentiated spermatogonial population.

The protein localises to the nucleus. It is found in the cytoplasm. Its function is as follows. Transcription regulator of both male and female germline differentiation. Suppresses genes involved in spermatogonial stem cells maintenance, and induces genes important for spermatogonial differentiation. Coordinates oocyte differentiation without affecting meiosis I. In Mus musculus (Mouse), this protein is Spermatogenesis- and oogenesis-specific basic helix-loop-helix-containing protein 2 (Sohlh2).